The primary structure comprises 502 residues: ATP synthase subunit alpha (502 aa).

169–176 serves as a coordination point for ATP; it reads GDRQTGKT.

This sequence belongs to the ATPase alpha/beta chains family. As to quaternary structure, F-type ATPases have 2 components, CF(1) - the catalytic core - and CF(0) - the membrane proton channel. CF(1) has five subunits: alpha(3), beta(3), gamma(1), delta(1), epsilon(1). CF(0) has three main subunits: a(1), b(2) and c(9-12). The alpha and beta chains form an alternating ring which encloses part of the gamma chain. CF(1) is attached to CF(0) by a central stalk formed by the gamma and epsilon chains, while a peripheral stalk is formed by the delta and b chains.

The protein resides in the cell inner membrane. The catalysed reaction is ATP + H2O + 4 H(+)(in) = ADP + phosphate + 5 H(+)(out). Produces ATP from ADP in the presence of a proton gradient across the membrane. The alpha chain is a regulatory subunit. The polypeptide is ATP synthase subunit alpha (Kosmotoga olearia (strain ATCC BAA-1733 / DSM 21960 / TBF 19.5.1)).